The chain runs to 131 residues: L-ectoine synthase (131 aa).

The protein belongs to the ectoine synthase family.

It carries out the reaction (2S)-4-acetamido-2-aminobutanoate = L-ectoine + H2O. The protein operates within amine and polyamine biosynthesis; ectoine biosynthesis; L-ectoine from L-aspartate 4-semialdehyde: step 3/3. In terms of biological role, catalyzes the circularization of gamma-N-acetyl-alpha,gamma-diaminobutyric acid (ADABA) to ectoine (1,4,5,6-tetrahydro-2-methyl-4-pyrimidine carboxylic acid), which is an excellent osmoprotectant. This is L-ectoine synthase from Wolinella succinogenes (strain ATCC 29543 / DSM 1740 / CCUG 13145 / JCM 31913 / LMG 7466 / NCTC 11488 / FDC 602W) (Vibrio succinogenes).